The chain runs to 465 residues: Polyadenylation factor subunit 2 (465 aa).

The segment covering 1–20 (MDGHNQNQYQNQNQIQQSQQ) has biased composition (low complexity). Residues 1–26 (MDGHNQNQYQNQNQIQQSQQPPLKKY) are disordered. WD repeat units lie at residues 133-163 (AHDS…KIWQ), 175-205 (AHTE…KIWN), 217-247 (GHHW…KLWD), 259-290 (KFKH…RVFD), and 348-378 (AHDK…RFWT). The segment at 417 to 465 (EFGAAPPPPATLEPHALPNMNGFINKKPRQEIPGIDSNIKSSTLPGLSI) is disordered. The segment covering 454 to 465 (NIKSSTLPGLSI) has biased composition (polar residues).

In terms of assembly, component of the cleavage and polyadenylation factor (CPF) complex, which is composed of at least PTI1, SYC1, SSU72, GLC7, MPE1, REF2, PFS2, PTA1, YSH1/BRR5, SWD2, CFT2/YDH1, YTH1, CFT1/YHH1, FIP1 and PAP1. Interacts with YSH1/BRR5, FIP1 and RNA14.

The protein localises to the nucleus. Integral and essential component of the cleavage and polyadenylation factor (CPF) complex, which plays a key role in polyadenylation-dependent pre-mRNA 3'-end formation and cooperates with cleavage factors including the CFIA complex and NAB4/CFIB. May bridge the CPF and CFIA complexes. This Saccharomyces cerevisiae (strain ATCC 204508 / S288c) (Baker's yeast) protein is Polyadenylation factor subunit 2 (PFS2).